Here is a 111-residue protein sequence, read N- to C-terminus: Large ribosomal subunit protein uL22 (111 aa).

This sequence belongs to the universal ribosomal protein uL22 family. In terms of assembly, part of the 50S ribosomal subunit.

This protein binds specifically to 23S rRNA; its binding is stimulated by other ribosomal proteins, e.g. L4, L17, and L20. It is important during the early stages of 50S assembly. It makes multiple contacts with different domains of the 23S rRNA in the assembled 50S subunit and ribosome. Functionally, the globular domain of the protein is located near the polypeptide exit tunnel on the outside of the subunit, while an extended beta-hairpin is found that lines the wall of the exit tunnel in the center of the 70S ribosome. This chain is Large ribosomal subunit protein uL22, found in Mycoplasma capricolum subsp. capricolum (strain California kid / ATCC 27343 / NCTC 10154).